The primary structure comprises 353 residues: Putative transport protein YrrI (353 aa).

8 helical membrane passes run 8–28 (LLLW…FFML), 37–57 (LVIK…YLLL), 77–97 (IYVL…PVLI), 165–185 (FLIA…IELM), 220–240 (LLVC…FGLP), 243–263 (LILG…PFIG), 269–289 (LIAM…VFIL), and 311–331 (VVIM…GMIL).

This sequence belongs to the autoinducer-2 exporter (AI-2E) (TC 2.A.86) family.

Its subcellular location is the cell membrane. The polypeptide is Putative transport protein YrrI (yrrI) (Bacillus subtilis (strain 168)).